The sequence spans 218 residues: Large ribosomal subunit protein uL4 (218 aa).

Positions 46 to 100 (ARQGTHSTKTRAEVRGGGRKPFRQKGTGRARQGSIRAPHFTGGGISHGPKPRDYA) are disordered. Residues 62–73 (GGRKPFRQKGTG) are compositionally biased toward basic residues.

Belongs to the universal ribosomal protein uL4 family. As to quaternary structure, part of the 50S ribosomal subunit.

Its function is as follows. One of the primary rRNA binding proteins, this protein initially binds near the 5'-end of the 23S rRNA. It is important during the early stages of 50S assembly. It makes multiple contacts with different domains of the 23S rRNA in the assembled 50S subunit and ribosome. In terms of biological role, forms part of the polypeptide exit tunnel. This chain is Large ribosomal subunit protein uL4, found in Corynebacterium efficiens (strain DSM 44549 / YS-314 / AJ 12310 / JCM 11189 / NBRC 100395).